The following is a 418-amino-acid chain: Serine/threonine-protein kinase Sgk1 (418 aa).

A disordered region spans residues 50 to 78 (PQEPELLNENSSPPPSPSQQINLGPSSNP). A compositionally biased stretch (polar residues) spans 68 to 78 (QQINLGPSSNP). Residues 85-342 (FQFLKIIGKG…FMEIKNHMFF (258 aa)) form the Protein kinase domain. ATP-binding positions include 91–99 (IGKGSFGKV) and Lys-114. Asp-209 functions as the Proton acceptor in the catalytic mechanism. An AGC-kinase C-terminal domain is found at 343-418 (SPINWDDLIN…SYAPPMESYL (76 aa)).

Belongs to the protein kinase superfamily. AGC Ser/Thr protein kinase family.

Its subcellular location is the cytoplasm. It is found in the nucleus. The protein resides in the endoplasmic reticulum. The catalysed reaction is L-seryl-[protein] + ATP = O-phospho-L-seryl-[protein] + ADP + H(+). The enzyme catalyses L-threonyl-[protein] + ATP = O-phospho-L-threonyl-[protein] + ADP + H(+). Protein kinase that may play an important role in cellular stress response. Plays an important role in activating certain potassium, sodium, and chloride channels, suggesting an involvement in the regulation of processes such as cell survival, neuronal excitability, and renal sodium excretion. The chain is Serine/threonine-protein kinase Sgk1 (sgk1) from Xenopus tropicalis (Western clawed frog).